A 1080-amino-acid polypeptide reads, in one-letter code: Carbamoyl phosphate synthase large chain (1080 aa).

The segment at 1 to 403 (MPKRTDLKTI…SLQKALRGLE (403 aa)) is carboxyphosphate synthetic domain. The ATP site is built by R129, R169, G175, G176, E208, V210, E215, G241, V242, H243, Q285, and E299. One can recognise an ATP-grasp 1 domain in the interval 133–328 (RVAMGEIGLD…IAKVAAKLAV (196 aa)). The Mg(2+) site is built by Q285, E299, and N301. 3 residues coordinate Mn(2+): Q285, E299, and N301. The segment at 404-554 (TGKIGLDPTG…YSTYEDECEA (151 aa)) is oligomerization domain. The interval 555 to 942 (LPSNRDKIMI…AFARAQEAGG (388 aa)) is carbamoyl phosphate synthetic domain. In terms of domain architecture, ATP-grasp 2 spans 679-876 (QQLVDKLGLK…LAKIAARCMA (198 aa)). Positions 715, 754, 756, 761, 787, 788, 789, 790, 830, and 847 each coordinate ATP. Mg(2+) contacts are provided by Q830, E847, and N849. Positions 830, 847, and 849 each coordinate Mn(2+). The MGS-like domain maps to 943 to 1080 (IKAPPLGKAF…LQELHKELEA (138 aa)). The interval 943–1080 (IKAPPLGKAF…LQELHKELEA (138 aa)) is allosteric domain.

It belongs to the CarB family. Composed of two chains; the small (or glutamine) chain promotes the hydrolysis of glutamine to ammonia, which is used by the large (or ammonia) chain to synthesize carbamoyl phosphate. Tetramer of heterodimers (alpha,beta)4. Mg(2+) serves as cofactor. Requires Mn(2+) as cofactor.

It carries out the reaction hydrogencarbonate + L-glutamine + 2 ATP + H2O = carbamoyl phosphate + L-glutamate + 2 ADP + phosphate + 2 H(+). It catalyses the reaction hydrogencarbonate + NH4(+) + 2 ATP = carbamoyl phosphate + 2 ADP + phosphate + 2 H(+). It participates in amino-acid biosynthesis; L-arginine biosynthesis; carbamoyl phosphate from bicarbonate: step 1/1. The protein operates within pyrimidine metabolism; UMP biosynthesis via de novo pathway; (S)-dihydroorotate from bicarbonate: step 1/3. In terms of biological role, large subunit of the glutamine-dependent carbamoyl phosphate synthetase (CPSase). CPSase catalyzes the formation of carbamoyl phosphate from the ammonia moiety of glutamine, carbonate, and phosphate donated by ATP, constituting the first step of 2 biosynthetic pathways, one leading to arginine and/or urea and the other to pyrimidine nucleotides. The large subunit (synthetase) binds the substrates ammonia (free or transferred from glutamine from the small subunit), hydrogencarbonate and ATP and carries out an ATP-coupled ligase reaction, activating hydrogencarbonate by forming carboxy phosphate which reacts with ammonia to form carbamoyl phosphate. The protein is Carbamoyl phosphate synthase large chain of Xanthomonas campestris pv. campestris (strain ATCC 33913 / DSM 3586 / NCPPB 528 / LMG 568 / P 25).